The primary structure comprises 1165 residues: Autophagy-related protein 11 (1165 aa).

2 coiled-coil regions span residues 239 to 304 (NKLN…YKNM) and 670 to 853 (DNIR…KQKK).

This sequence belongs to the ATG11 family. In terms of assembly, homodimer and potential homooligomers.

The protein localises to the preautophagosomal structure membrane. Its function is as follows. Plays an essential role in both non-selective and selective autophagy such as mitophagy. Recruits mitochondria for their selective degradation via autophagy (mitophagy) during starvation, through its interaction with ATG32. Works as scaffold proteins that recruit ATG proteins to the pre-autophagosome (PAS), the site of vesicle/autophagosome formation. Required for ATG9 anterograde transport from the mitochondria to the PAS. In Candida albicans (strain SC5314 / ATCC MYA-2876) (Yeast), this protein is Autophagy-related protein 11.